A 70-amino-acid polypeptide reads, in one-letter code: ATP synthase subunit c (70 aa).

Transmembrane regions (helical) follow at residues 5–25 (AAAI…GLIV) and 47–67 (FIGV…AFMV).

The protein belongs to the ATPase C chain family. F-type ATPases have 2 components, F(1) - the catalytic core - and F(0) - the membrane proton channel. F(1) has five subunits: alpha(3), beta(3), gamma(1), delta(1), epsilon(1). F(0) has three main subunits: a(1), b(2) and c(10-14). The alpha and beta chains form an alternating ring which encloses part of the gamma chain. F(1) is attached to F(0) by a central stalk formed by the gamma and epsilon chains, while a peripheral stalk is formed by the delta and b chains.

Its subcellular location is the cell membrane. F(1)F(0) ATP synthase produces ATP from ADP in the presence of a proton or sodium gradient. F-type ATPases consist of two structural domains, F(1) containing the extramembraneous catalytic core and F(0) containing the membrane proton channel, linked together by a central stalk and a peripheral stalk. During catalysis, ATP synthesis in the catalytic domain of F(1) is coupled via a rotary mechanism of the central stalk subunits to proton translocation. In terms of biological role, key component of the F(0) channel; it plays a direct role in translocation across the membrane. A homomeric c-ring of between 10-14 subunits forms the central stalk rotor element with the F(1) delta and epsilon subunits. This is ATP synthase subunit c from Anoxybacillus flavithermus (strain DSM 21510 / WK1).